The chain runs to 169 residues: Regulator of sigma D (169 aa).

The protein belongs to the Rsd/AlgQ family. As to quaternary structure, interacts with RpoD.

It localises to the cytoplasm. In terms of biological role, binds RpoD and negatively regulates RpoD-mediated transcription activation by preventing the interaction between the primary sigma factor RpoD with the catalytic core of the RNA polymerase and with promoter DNA. May be involved in replacement of the RNA polymerase sigma subunit from RpoD to RpoS during the transition from exponential growth to the stationary phase. The protein is Regulator of sigma D of Yersinia pestis.